A 66-amino-acid chain; its full sequence is Large ribosomal subunit protein bL31 (66 aa).

Residues C16, C18, C36, and C39 each coordinate Zn(2+).

This sequence belongs to the bacterial ribosomal protein bL31 family. Type A subfamily. Part of the 50S ribosomal subunit. Zn(2+) is required as a cofactor.

Binds the 23S rRNA. In Geobacillus kaustophilus (strain HTA426), this protein is Large ribosomal subunit protein bL31.